We begin with the raw amino-acid sequence, 367 residues long: Popeye domain-containing protein 2 (367 aa).

An N-linked (GlcNAc...) asparagine glycan is attached at Asn-4. Helical transmembrane passes span Phe-36 to Ile-56 and Ile-77 to Tyr-97. Disordered regions lie at residues Pro-273–Ala-292 and Ala-312–Leu-367. Acidic residues predominate over residues Gly-278–Leu-290. The span at Pro-344–Gln-356 shows a compositional bias: polar residues. Asn-347 carries N-linked (GlcNAc...) asparagine glycosylation. Thr-364 carries the phosphothreonine modification.

It belongs to the popeye family. Expressed in the developing and adult heart, with high expression levels in the sinus and atrioventricular nodes. Also expressed in the bladder and skeletal muscle.

It is found in the membrane. The protein localises to the cell membrane. It localises to the sarcolemma. Important for the maintenance of cardiac function. Plays a regulatory function in heart rate dynamics mediated, at least in part, through cAMP-binding and, probably, by increasing cell surface expression of the potassium channel KCNK2 and enhancing current density. The sequence is that of Popeye domain-containing protein 2 (Popdc2) from Mus musculus (Mouse).